Reading from the N-terminus, the 132-residue chain is Transcription antitermination protein NusB (132 aa).

This sequence belongs to the NusB family.

Involved in transcription antitermination. Required for transcription of ribosomal RNA (rRNA) genes. Binds specifically to the boxA antiterminator sequence of the ribosomal RNA (rrn) operons. The polypeptide is Transcription antitermination protein NusB (Lachnoclostridium phytofermentans (strain ATCC 700394 / DSM 18823 / ISDg) (Clostridium phytofermentans)).